The primary structure comprises 131 residues: MREFKRTDRVADQLQQELAVLIQREIKDPRLGMVTVSSVKVSRDLGYADIYITLLGENDAARIDENLKVLRHARGFLRSQIANRIKLRHVPELRFHYDESVVRGQRLSSLIDEAVADDRRRHEDDDEDEVR.

It belongs to the RbfA family. Monomer. Binds 30S ribosomal subunits, but not 50S ribosomal subunits or 70S ribosomes.

It is found in the cytoplasm. One of several proteins that assist in the late maturation steps of the functional core of the 30S ribosomal subunit. Associates with free 30S ribosomal subunits (but not with 30S subunits that are part of 70S ribosomes or polysomes). Required for efficient processing of 16S rRNA. May interact with the 5'-terminal helix region of 16S rRNA. The protein is Ribosome-binding factor A of Chromohalobacter salexigens (strain ATCC BAA-138 / DSM 3043 / CIP 106854 / NCIMB 13768 / 1H11).